The following is a 426-amino-acid chain: Enolase (426 aa).

Gln163 contacts (2R)-2-phosphoglycerate. Residue Glu205 is the Proton donor of the active site. Residues Asp242, Glu285, and Asp312 each contribute to the Mg(2+) site. The (2R)-2-phosphoglycerate site is built by Lys337, Arg366, Ser367, and Lys388. Residue Lys337 is the Proton acceptor of the active site.

Belongs to the enolase family. As to quaternary structure, component of the RNA degradosome, a multiprotein complex involved in RNA processing and mRNA degradation. It depends on Mg(2+) as a cofactor.

Its subcellular location is the cytoplasm. The protein resides in the secreted. It localises to the cell surface. It catalyses the reaction (2R)-2-phosphoglycerate = phosphoenolpyruvate + H2O. Its pathway is carbohydrate degradation; glycolysis; pyruvate from D-glyceraldehyde 3-phosphate: step 4/5. Its function is as follows. Catalyzes the reversible conversion of 2-phosphoglycerate (2-PG) into phosphoenolpyruvate (PEP). It is essential for the degradation of carbohydrates via glycolysis. The chain is Enolase from Nitrosococcus oceani (strain ATCC 19707 / BCRC 17464 / JCM 30415 / NCIMB 11848 / C-107).